Here is a 313-residue protein sequence, read N- to C-terminus: Methionyl-tRNA formyltransferase (313 aa).

109 to 112 (SLLP) contributes to the (6S)-5,6,7,8-tetrahydrofolate binding site.

The protein belongs to the Fmt family.

It catalyses the reaction L-methionyl-tRNA(fMet) + (6R)-10-formyltetrahydrofolate = N-formyl-L-methionyl-tRNA(fMet) + (6S)-5,6,7,8-tetrahydrofolate + H(+). Its function is as follows. Attaches a formyl group to the free amino group of methionyl-tRNA(fMet). The formyl group appears to play a dual role in the initiator identity of N-formylmethionyl-tRNA by promoting its recognition by IF2 and preventing the misappropriation of this tRNA by the elongation apparatus. In Thermotoga neapolitana (strain ATCC 49049 / DSM 4359 / NBRC 107923 / NS-E), this protein is Methionyl-tRNA formyltransferase.